The sequence spans 228 residues: Prolactin (228 aa).

A signal peptide spans 1–29 (MCPKGSSVKGSLLLLLLMSSRFLFKAVES). A disulfide bridge connects residues C33 and C40. 3 positions are modified to phosphoserine: S55, S63, and S119. Disulfide bonds link C87–C203 and C220–C228.

It belongs to the somatotropin/prolactin family. Interacts with PRLR.

Its subcellular location is the secreted. Functionally, prolactin acts primarily on the mammary gland by promoting lactation. The sequence is that of Prolactin (PRL) from Monodelphis domestica (Gray short-tailed opossum).